The sequence spans 481 residues: Betaine aldehyde dehydrogenase 2 (481 aa).

S29 and D96 together coordinate K(+). 152–154 (GAW) lines the NAD(+) pocket. Residue K164 is the Charge relay system of the active site. 178 to 181 (KPSE) lines the NAD(+) pocket. V182 lines the K(+) pocket. 231-234 (SVKT) contacts NAD(+). I246 is a binding site for K(+). E252 serves as the catalytic Proton acceptor. The NAD(+) site is built by G254, C286, and E383. C286 serves as the catalytic Nucleophile. Position 286 is a cysteine sulfenic acid (-SOH) (C286). K(+) contacts are provided by K453 and G456. E460 serves as the catalytic Charge relay system.

This sequence belongs to the aldehyde dehydrogenase family. As to quaternary structure, dimer of dimers. The cofactor is K(+).

The catalysed reaction is betaine aldehyde + NAD(+) + H2O = glycine betaine + NADH + 2 H(+). The protein operates within amine and polyamine biosynthesis; betaine biosynthesis via choline pathway; betaine from betaine aldehyde: step 1/1. In terms of biological role, involved in the biosynthesis of the osmoprotectant glycine betaine. Catalyzes the irreversible oxidation of betaine aldehyde to the corresponding acid. The sequence is that of Betaine aldehyde dehydrogenase 2 from Rhizobium meliloti (strain 1021) (Ensifer meliloti).